A 387-amino-acid chain; its full sequence is MKNVVIVDCIRTPMGRSKNGVFRHTRAEDLSAHLMKGLLKRNPSVDPNDIEDIYWGCVQQTLEQGFNIARNSALLAGLPQSIAATTVNRLCGSSMQALHDASRAIMVGDAEICIIGGVEHMGHVPMNHGVDFHSGLSKSVAKASGMMGLTAEMLGKMHGISREQQDAFALASHQKAHKATIEGYFDSEILPMEGHDENGALTLVTHDEVIRPETTLEGLAALRPAFDPANGTVTAGSSSALSDGASAMLVMSEEKANELGLPIRAKVRSMAVSGCDPSIMGYGPVPATKKALKRAGLSLDDIELFELNEAFAAQSLPCIKDLGLLDVMDEKVNLNGGAIALGHPLGCSGSRIATTLINNMERTGAKLGVATMCIGLGQGIATVFERP.

Cysteine 91 functions as the Acyl-thioester intermediate in the catalytic mechanism. Catalysis depends on proton acceptor residues histidine 343 and cysteine 373.

It belongs to the thiolase-like superfamily. Thiolase family. In terms of assembly, heterotetramer of two alpha chains (FadB) and two beta chains (FadA).

It localises to the cytoplasm. The enzyme catalyses an acyl-CoA + acetyl-CoA = a 3-oxoacyl-CoA + CoA. Its pathway is lipid metabolism; fatty acid beta-oxidation. Its function is as follows. Catalyzes the final step of fatty acid oxidation in which acetyl-CoA is released and the CoA ester of a fatty acid two carbons shorter is formed. This is 3-ketoacyl-CoA thiolase from Aliivibrio fischeri (strain ATCC 700601 / ES114) (Vibrio fischeri).